The chain runs to 316 residues: Olfactory receptor 12D3 (316 aa).

At 1–23 (MENVTTMNEFLLLGLTGVQELQP) the chain is on the extracellular side. A glycan (N-linked (GlcNAc...) asparagine) is linked at N3. A helical transmembrane segment spans residues 24 to 44 (FFFGIFLIIYLINLIGNGSIL). Over 45-52 (VMVVLEPQ) the chain is Cytoplasmic. Residues 53 to 73 (LHSPMYFFLGNLSCLDISYSS) form a helical membrane-spanning segment. At 74-97 (VTLPKLLVNLVCSRRAISFLGCIT) the chain is on the extracellular side. Cysteines 95 and 187 form a disulfide. A helical membrane pass occupies residues 98-118 (QLHFFHFLGSTEAILLAIMAF). Topologically, residues 119–137 (DRFVAICNPLRYTVIMNPQ) are cytoplasmic. A helical transmembrane segment spans residues 138 to 158 (VCILLAAAAWLISFFYALMHS). Residues 159–195 (VMTAHLSFCGSQKLNHFFYDVKPLLELACSDTLLNQW) are Extracellular-facing. The helical transmembrane segment at 196–215 (LLSIVTGSISMGAFFLTLLS) threads the bilayer. Over 216 to 236 (CFYVIGFLLFKNRSCRILHKA) the chain is Cytoplasmic. Residues 237–257 (LSTCASHFMVVCLFYGPVGFT) form a helical membrane-spanning segment. Over 258-270 (YIRPASATSMIQD) the chain is Extracellular. A helical membrane pass occupies residues 271 to 291 (RIMAIMYSAVTPVLNPLIYTL). Over 292-316 (RNKEVMMALKKIFGRKLFKDWQQHH) the chain is Cytoplasmic.

Belongs to the G-protein coupled receptor 1 family.

It localises to the cell membrane. Its function is as follows. Odorant receptor. The polypeptide is Olfactory receptor 12D3 (OR12D3) (Homo sapiens (Human)).